The chain runs to 1243 residues: Tau-tubulin kinase 2 (1243 aa).

The Protein kinase domain occupies 21–284 (WKVLRKIGGG…LLTSVFDNSI (264 aa)). ATP-binding positions include 27–35 (IGGGGFGEI) and K50. D141 serves as the catalytic Proton acceptor. At S445 the chain carries Phosphoserine. Residues 674–683 (VASTQSTSGS) show a composition bias toward polar residues. Disordered stretches follow at residues 674–695 (VAST…KKDL) and 737–761 (TGHD…DPPD). Position 786 is a phosphoserine (S786). The interval 1063 to 1086 (QINGSASPQFLPRPPPGKPPVRPG) is disordered. A compositionally biased stretch (pro residues) spans 1073 to 1084 (LPRPPPGKPPVR). The residue at position 1102 (S1102) is a Phosphoserine. The span at 1115–1129 (QNGSQKSRSTTQCKS) shows a compositional bias: polar residues. Positions 1115 to 1243 (QNGSQKSRST…KSKPASKLSR (129 aa)) are disordered. 3 stretches are compositionally biased toward low complexity: residues 1144 to 1170 (VVPR…PSRA), 1187 to 1202 (SKSP…SRRS), and 1227 to 1243 (SSKT…KLSR).

Belongs to the protein kinase superfamily. CK1 Ser/Thr protein kinase family. In terms of assembly, interacts with CEP164. Interacts with MCRS1; the interaction is required for recruitment of TTBK2 to the mother centriole.

It localises to the cell projection. Its subcellular location is the cilium. It is found in the cytoplasm. The protein resides in the cytoskeleton. The protein localises to the cilium basal body. It localises to the microtubule organizing center. Its subcellular location is the centrosome. It is found in the centriole. The protein resides in the cytosol. The protein localises to the nucleus. It catalyses the reaction L-seryl-[protein] + ATP = O-phospho-L-seryl-[protein] + ADP + H(+). The enzyme catalyses L-threonyl-[protein] + ATP = O-phospho-L-threonyl-[protein] + ADP + H(+). Serine/threonine kinase that acts as a key regulator of ciliogenesis: controls the initiation of ciliogenesis by binding to the distal end of the basal body and promoting the removal of CCP110, which caps the mother centriole, leading to the recruitment of IFT proteins, which build the ciliary axoneme. Has some substrate preference for proteins that are already phosphorylated on a Tyr residue at the +2 position relative to the phosphorylation site. Able to phosphorylate tau on serines in vitro. Phosphorylates MPHOSPH9 which promotes its ubiquitination and proteasomal degradation, loss of MPHOSPH9 facilitates the removal of the CP110-CEP97 complex (a negative regulator of ciliogenesis) from the mother centrioles, promoting the initiation of ciliogenesis. Required for recruitment of CPLANE2 and INTU to the mother centriole. The protein is Tau-tubulin kinase 2 (Ttbk2) of Mus musculus (Mouse).